We begin with the raw amino-acid sequence, 424 residues long: Serine--tRNA ligase (424 aa).

Thr-231–Glu-233 contributes to the L-serine binding site. Arg-262 to Glu-264 provides a ligand contact to ATP. Glu-285 is an L-serine binding site. Residue Glu-349 to Ser-352 participates in ATP binding. Residue Ser-385 coordinates L-serine.

The protein belongs to the class-II aminoacyl-tRNA synthetase family. Type-1 seryl-tRNA synthetase subfamily. Homodimer. The tRNA molecule binds across the dimer.

The protein localises to the cytoplasm. The enzyme catalyses tRNA(Ser) + L-serine + ATP = L-seryl-tRNA(Ser) + AMP + diphosphate + H(+). The catalysed reaction is tRNA(Sec) + L-serine + ATP = L-seryl-tRNA(Sec) + AMP + diphosphate + H(+). It functions in the pathway aminoacyl-tRNA biosynthesis; selenocysteinyl-tRNA(Sec) biosynthesis; L-seryl-tRNA(Sec) from L-serine and tRNA(Sec): step 1/1. Catalyzes the attachment of serine to tRNA(Ser). Is also able to aminoacylate tRNA(Sec) with serine, to form the misacylated tRNA L-seryl-tRNA(Sec), which will be further converted into selenocysteinyl-tRNA(Sec). The chain is Serine--tRNA ligase from Geobacillus kaustophilus (strain HTA426).